Reading from the N-terminus, the 478-residue chain is Glycogen synthase (478 aa).

An ADP-alpha-D-glucose-binding site is contributed by K16.

It belongs to the glycosyltransferase 1 family. Bacterial/plant glycogen synthase subfamily.

The catalysed reaction is [(1-&gt;4)-alpha-D-glucosyl](n) + ADP-alpha-D-glucose = [(1-&gt;4)-alpha-D-glucosyl](n+1) + ADP + H(+). It functions in the pathway glycan biosynthesis; glycogen biosynthesis. Functionally, synthesizes alpha-1,4-glucan chains using ADP-glucose. The polypeptide is Glycogen synthase (Lachnoclostridium phytofermentans (strain ATCC 700394 / DSM 18823 / ISDg) (Clostridium phytofermentans)).